Reading from the N-terminus, the 772-residue chain is Carnitine O-palmitoyltransferase 1, muscle isoform (772 aa).

The Cytoplasmic segment spans residues 1-47; that stretch reads MAEAHQAVAFQFTVTPDGVDFRLSREALKHVYLSGINSWKKRLIRIK. A helical membrane pass occupies residues 48–73; that stretch reads NGILRGVYPGSPTSWLVVIMATVGSS. Topologically, residues 74–102 are mitochondrial intermembrane; sequence FCNVDISLGLVSCIQRCLPQGCGPYQTPQ. The chain crosses the membrane as a helical span at residues 103 to 122; it reads TRALLSMAIFSTGVWVTGIF. Residues 123-772 lie on the Cytoplasmic side of the membrane; the sequence is FFRQTLKLLL…DLFQVPKAYS (650 aa). H473 acts as the Proton acceptor in catalysis. CoA is bound at residue 555–567; that stretch reads GKGLIKKCRTSPD. (R)-carnitine contacts are provided by Y589 and T602.

Belongs to the carnitine/choline acetyltransferase family. Strong expression in heart and skeletal muscle. No expression in liver and kidney.

The protein resides in the mitochondrion outer membrane. The catalysed reaction is (R)-carnitine + hexadecanoyl-CoA = O-hexadecanoyl-(R)-carnitine + CoA. The protein operates within lipid metabolism; fatty acid beta-oxidation. In terms of biological role, catalyzes the transfer of the acyl group of long-chain fatty acid-CoA conjugates onto carnitine, an essential step for the mitochondrial uptake of long-chain fatty acids and their subsequent beta-oxidation in the mitochondrion. In Homo sapiens (Human), this protein is Carnitine O-palmitoyltransferase 1, muscle isoform (CPT1B).